The following is a 282-amino-acid chain: Undecaprenyl-diphosphatase (282 aa).

7 helical membrane-spanning segments follow: residues 40 to 60, 87 to 107, 116 to 136, 153 to 173, 196 to 216, 229 to 249, and 256 to 276; these read GAAFSAIVQIGTLAAVLIYFY, MGWMIAAGTMPIVILGLLFKT, LYWISVALIVLALMLTLAEWL, IGWKEALLIGLAQSIALIPGS, FSFLLSLPAVFAAGIYQLYET, NLAVATLFAGIVGYASIAFLI, and STALFILYRIALGVGILGLIA.

Belongs to the UppP family.

It is found in the cell inner membrane. The enzyme catalyses di-trans,octa-cis-undecaprenyl diphosphate + H2O = di-trans,octa-cis-undecaprenyl phosphate + phosphate + H(+). Functionally, catalyzes the dephosphorylation of undecaprenyl diphosphate (UPP). Confers resistance to bacitracin. This is Undecaprenyl-diphosphatase from Chlorobium phaeobacteroides (strain BS1).